The chain runs to 1183 residues: Atrophin-1 (1183 aa).

3 disordered regions span residues 1 to 603 (MKTR…ITTS), 617 to 760 (SPAG…ARFN), and 780 to 855 (LEGS…HRPP). The Nuclear localization signal motif lies at 16-32 (RKKEAPGPREELRSRGR). Positions 17-29 (KKEAPGPREELRS) are enriched in basic and acidic residues. Serine 34 carries the phosphoserine modification. A compositionally biased stretch (basic and acidic residues) spans 45–63 (GKAEKSRQTAKKARVEETS). Serine 77, serine 79, serine 100, serine 102, and serine 106 each carry phosphoserine. The segment covering 107 to 127 (LDGRSINDDGSSDPRDIDQDN) has biased composition (basic and acidic residues). Residues 128 to 151 (RSTSPSIYSPGSVENDSDSSSGLS) are compositionally biased toward polar residues. Pro residues-rich tracts occupy residues 157-173 (PYHP…PPDS) and 207-218 (GPPPGAPPPHPQ). Residues 261-272 (IPISSSGASGAP) show a composition bias toward low complexity. Positions 344-373 (PPGPEKGPTLAPSPHPLPPASSSAPGPPMR) are enriched in pro residues. The segment covering 377 to 400 (SSCSSSSVAASSSSSAATSQYPAS) has biased composition (low complexity). Polar residues predominate over residues 415-436 (SMSVSNQPPKYTQPSLPSQAVW). The tract at residues 510-560 (HPLESSNSHHAHPYNMSPSLGSLRPYPPGPAHLPPSHGQVSYSQAGPNGPP) is involved in binding BAIAP2. The span at 562 to 584 (SSSSNSSGSSSQAAYSCSHPSSS) shows a compositional bias: low complexity. Serine 625 carries the post-translational modification Phosphoserine. Position 634 is an N6-acetyllysine (lysine 634). Phosphothreonine is present on threonine 646. Serine 654 carries the phosphoserine modification. Position 662 is a phosphothreonine (threonine 662). Composition is skewed to pro residues over residues 701-711 (LPPPPAAPTTG) and 732-745 (SPVP…PPPK). A Phosphoserine; by MAPK8 modification is found at serine 732. Serine 739 and serine 741 each carry phosphoserine. The segment covering 788 to 832 (KRADLVEKVRREAEQRAREEKEREREREREKEREREKERELERSV) has biased composition (basic and acidic residues). The interval 872-887 (DTPALRTLSEYARPHV) is required for interaction with FAT1. The residue at position 889 (serine 889) is a Phosphoserine. Residues 921-940 (PAAREREREARERDLRDRLK) form a disordered region. Residues 922–940 (AAREREREARERDLRDRLK) show a composition bias toward basic and acidic residues. Positions 1026–1034 (ALGNDPLAR) match the Nuclear export signal motif. Asymmetric dimethylarginine is present on arginine 1108. Lysine 1176 participates in a covalent cross-link: Glycyl lysine isopeptide (Lys-Gly) (interchain with G-Cter in SUMO2).

Interacts with NR2E1; the interaction represses the transcriptional activity of NR2E1. Interact (via its N-terminus) with FAT1 (via a C-terminal domain). Interacts with BAIAP2, WWP1, WWP2, WWP3 and RERE. Interacts (via its N-terminus) with MTG8; the interaction enhances transcriptional repression of MTG8. Interacts with PQBP1. In terms of processing, phosphorylated in vitro by MAPK8/JNK1 on Ser-732. In terms of tissue distribution, predominant neuronal expression, Expressed in most brain regions including striatum, hippocampus, cerebral cortex, diencephalon, brain stem and cerebellum. Highest levels in cerebellum. Also highly expressed in kidney and testis, low expression in skeletal muscle and heart.

Its subcellular location is the nucleus. It localises to the cytoplasm. It is found in the perinuclear region. The protein resides in the cell junction. Functionally, transcriptional corepressor. Recruits NR2E1 to repress transcription. Promotes vascular smooth cell (VSMC) migration and orientation. Corepressor of MTG8 transcriptional repression. Has some intrinsic repression activity. In Rattus norvegicus (Rat), this protein is Atrophin-1 (Atn1).